A 234-amino-acid polypeptide reads, in one-letter code: Ribosomal RNA small subunit methyltransferase G (234 aa).

S-adenosyl-L-methionine contacts are provided by glycine 85, phenylalanine 90, and arginine 155.

It belongs to the methyltransferase superfamily. RNA methyltransferase RsmG family.

Its subcellular location is the cytoplasm. It carries out the reaction guanosine(527) in 16S rRNA + S-adenosyl-L-methionine = N(7)-methylguanosine(527) in 16S rRNA + S-adenosyl-L-homocysteine. Functionally, specifically methylates the N7 position of guanine in position 527 of 16S rRNA. The protein is Ribosomal RNA small subunit methyltransferase G of Rhodopseudomonas palustris (strain BisB18).